A 262-amino-acid chain; its full sequence is KTSTRTRCAFEVAARDQGAGVTYLESSASQIGHKESIKDTARVLGRMYDAIEYRGFGQETVEELAKYAGVPVFNGLTNEFHPTQMLADALTMREHGGKPLNQTSFAYVGDARYNMGNSLLILGAKLGMDVRIGAPEGLWPSEGIIAAANAVAEETGAKITLTANPQEAVKGVGFIHTDVWVSMGEPKEIWQERIDLLKDYRVTSELMAASGNPQVKFMHCLPAFHNRETKIGEWIYETFGLNGVEVTEEVFESPAGIVFDQA.

Residues S3–R7, Q30, R54, and H81–Q84 each bind carbamoyl phosphate. Residues N114, D178, and S182–M183 contribute to the L-ornithine site. Carbamoyl phosphate contacts are provided by residues H219 to P222 and T247.

It belongs to the aspartate/ornithine carbamoyltransferase superfamily. OTCase family.

The protein resides in the cytoplasm. The catalysed reaction is carbamoyl phosphate + L-ornithine = L-citrulline + phosphate + H(+). The protein operates within amino-acid biosynthesis; L-arginine biosynthesis; L-arginine from L-ornithine and carbamoyl phosphate: step 1/3. Its function is as follows. Reversibly catalyzes the transfer of the carbamoyl group from carbamoyl phosphate (CP) to the N(epsilon) atom of ornithine (ORN) to produce L-citrulline. This is Ornithine carbamoyltransferase (argF) from Neisseria lactamica.